The chain runs to 308 residues: Quinolinate synthase (308 aa).

Positions 24 and 41 each coordinate iminosuccinate. Position 86 (C86) interacts with [4Fe-4S] cluster. Iminosuccinate is bound by residues 112 to 114 and S129; that span reads YIN. C172 provides a ligand contact to [4Fe-4S] cluster. Residues 198-200 and T215 each bind iminosuccinate; that span reads HPE. Position 265 (C265) interacts with [4Fe-4S] cluster.

This sequence belongs to the quinolinate synthase family. Type 2 subfamily. It depends on [4Fe-4S] cluster as a cofactor.

Its subcellular location is the cytoplasm. It carries out the reaction iminosuccinate + dihydroxyacetone phosphate = quinolinate + phosphate + 2 H2O + H(+). It functions in the pathway cofactor biosynthesis; NAD(+) biosynthesis; quinolinate from iminoaspartate: step 1/1. Its function is as follows. Catalyzes the condensation of iminoaspartate with dihydroxyacetone phosphate to form quinolinate. The polypeptide is Quinolinate synthase (Sulfurihydrogenibium sp. (strain YO3AOP1)).